The following is a 269-amino-acid chain: Tryptophan synthase alpha chain (269 aa).

Active-site proton acceptor residues include Glu-49 and Asp-60.

Belongs to the TrpA family. As to quaternary structure, tetramer of two alpha and two beta chains.

It catalyses the reaction (1S,2R)-1-C-(indol-3-yl)glycerol 3-phosphate + L-serine = D-glyceraldehyde 3-phosphate + L-tryptophan + H2O. It functions in the pathway amino-acid biosynthesis; L-tryptophan biosynthesis; L-tryptophan from chorismate: step 5/5. Functionally, the alpha subunit is responsible for the aldol cleavage of indoleglycerol phosphate to indole and glyceraldehyde 3-phosphate. In Buchnera aphidicola subsp. Schlechtendalia chinensis, this protein is Tryptophan synthase alpha chain.